The chain runs to 243 residues: Orotidine 5'-phosphate decarboxylase (243 aa).

Residues Asp-12, Lys-34, 61-70 (DLKFHDIPNT), Thr-125, Arg-187, Gln-196, Gly-216, and Arg-217 contribute to the substrate site. Residue Lys-63 is the Proton donor of the active site.

Belongs to the OMP decarboxylase family. Type 1 subfamily. As to quaternary structure, homodimer.

The enzyme catalyses orotidine 5'-phosphate + H(+) = UMP + CO2. Its pathway is pyrimidine metabolism; UMP biosynthesis via de novo pathway; UMP from orotate: step 2/2. In terms of biological role, catalyzes the decarboxylation of orotidine 5'-monophosphate (OMP) to uridine 5'-monophosphate (UMP). The polypeptide is Orotidine 5'-phosphate decarboxylase (Heliobacterium modesticaldum (strain ATCC 51547 / Ice1)).